We begin with the raw amino-acid sequence, 537 residues long: Glucan 1,6-alpha-glucosidase (537 aa).

The Nucleophile role is filled by Asp194. Glu236 acts as the Proton donor in catalysis.

It belongs to the glycosyl hydrolase 13 family.

The protein resides in the cytoplasm. It carries out the reaction Hydrolysis of (1-&gt;6)-alpha-D-glucosidic linkages in (1-&gt;6)-alpha-D-glucans and derived oligosaccharides.. In terms of biological role, the physiological substrates may be short isomaltosaccharides. In Streptococcus dysgalactiae subsp. equisimilis (Streptococcus equisimilis), this protein is Glucan 1,6-alpha-glucosidase (dexB).